The primary structure comprises 68 residues: Antimicrobial peptide Eval418 (68 aa).

The N-terminal stretch at 1–23 (MRTQLAVLLVALVLLQMIAQSEA) is a signal peptide. An Isoleucine amide modification is found at I36. A propeptide spanning residues 37 to 68 (GKRGLRNLDDLDDVFDDDLSAADLEFLKQLMR) is cleaved from the precursor.

The protein belongs to the non-disulfide-bridged peptide (NDBP) superfamily. Short antimicrobial peptide (group 4) family. As to expression, expressed by the venom gland.

Its subcellular location is the secreted. In terms of biological role, probable antimicrobial peptide. Shows dose-dependent and time-dependent inactivation of herpes simplex virus type 1 (HSV-1) and dose-dependent inhibition of HSV-1 viral attachment to host cells. Scarcely suppress an established HSV-1 infection due to poor cellular uptake. This is Antimicrobial peptide Eval418 from Euscorpiops validus (Scorpion).